Reading from the N-terminus, the 178-residue chain is Large ribosomal subunit protein uL6 (178 aa).

It belongs to the universal ribosomal protein uL6 family. Part of the 50S ribosomal subunit.

Functionally, this protein binds to the 23S rRNA, and is important in its secondary structure. It is located near the subunit interface in the base of the L7/L12 stalk, and near the tRNA binding site of the peptidyltransferase center. In Lactococcus lactis subsp. lactis (strain IL1403) (Streptococcus lactis), this protein is Large ribosomal subunit protein uL6.